The chain runs to 321 residues: Beta-ketoacyl-[acyl-carrier-protein] synthase III (321 aa).

Catalysis depends on residues cysteine 113 and histidine 246. The segment at 247 to 251 is ACP-binding; that stretch reads QANVR. Asparagine 276 is an active-site residue.

This sequence belongs to the thiolase-like superfamily. FabH family. Homodimer.

It localises to the cytoplasm. The enzyme catalyses malonyl-[ACP] + acetyl-CoA + H(+) = 3-oxobutanoyl-[ACP] + CO2 + CoA. The protein operates within lipid metabolism; fatty acid biosynthesis. Catalyzes the condensation reaction of fatty acid synthesis by the addition to an acyl acceptor of two carbons from malonyl-ACP. Catalyzes the first condensation reaction which initiates fatty acid synthesis and may therefore play a role in governing the total rate of fatty acid production. Possesses both acetoacetyl-ACP synthase and acetyl transacylase activities. Its substrate specificity determines the biosynthesis of branched-chain and/or straight-chain of fatty acids. The polypeptide is Beta-ketoacyl-[acyl-carrier-protein] synthase III (Enterococcus faecalis (strain ATCC 700802 / V583)).